Reading from the N-terminus, the 116-residue chain is Spexin (116 aa).

The N-terminal stretch at 1–26 (MKGPSILAVAALALLLVLSVLENSSG) is a signal peptide. A propeptide spanning residues 27-35 (APQRLSEKR) is cleaved from the precursor. At Q49 the chain carries Glutamine amide. 2 propeptides span residues 50-116 (GHRF…RFYW) and 74-116 (PNLQ…RFYW). Residues 56 to 73 (DQSRRKELADRPPPERRN) are compositionally biased toward basic and acidic residues. The disordered stretch occupies residues 56–75 (DQSRRKELADRPPPERRNPN).

It belongs to the spexin family. As to expression, widely expressed; predominantly expressed in epithelial cells in the skin, respiratory, digestive, urinary and reproductive systems, retina, adrenal gland and various brain regions. In the adrenal gland, expressed in parenchymal cells of the cortex and in ganglionic cells and intermingled cortical cells of the medulla. Expressed in the type I glomic cells within the carotid body (at protein level). Widely expressed. Strongly expressed in esophagus, liver, pancreas, kidney, brain, hypothalamus, thyroid and ovary. Expressed in the zona glomerulosa (ZG) and zona fasciculata/reticularis (ZF/R) of the adrenal gland. Also expressed in stomach, lung, skeletal muscle, heart, uterus, spleen, adrenal gland and testis. Weakly expressed in small intestine, thymus, urinary bladder and adenohypophysis. In the brain, is expressed in the Barrington's nucleus, with lesser amount in the ventrolateral caudal periaqueductal gray (PAG) and in the mesopontine tegmentum.

It localises to the secreted. The protein resides in the extracellular space. Its subcellular location is the cytoplasmic vesicle. It is found in the secretory vesicle. Functionally, plays a role as a central modulator of cardiovascular and renal function and nociception. Also plays a role in energy metabolism and storage. Inhibits adrenocortical cell proliferation with minor stimulation on corticosteroid release. Its function is as follows. Acts as a ligand for galanin receptors GALR2 and GALR3. Intracerebroventricular administration of the peptide induces an increase in arterial blood pressure, a decrease in both heart rate and renal excretion and delayed natriuresis. Intraventricular administration of the peptide induces antinociceptive activity. Intraperitoneal administration of the peptide induces a reduction in food consumption and body weight. Inhibits long chain fatty acid uptake into adipocytes. Also induces contraction of muscarinic-like stomach smooth muscles. In terms of biological role, intracerebroventricular administration of the peptide induces a decrease in heart rate, but no change in arterial pressure, and an increase in urine flow rate. Intraventricular administration of the peptide induces antinociceptive activity. This is Spexin (SPX) from Rattus norvegicus (Rat).